A 251-amino-acid polypeptide reads, in one-letter code: Small ribosomal subunit protein uS2 (251 aa).

Positions 232 to 251 (LQTGEEEMAAAEGESEQVEA) are disordered. The segment covering 235-251 (GEEEMAAAEGESEQVEA) has biased composition (acidic residues).

Belongs to the universal ribosomal protein uS2 family.

The protein is Small ribosomal subunit protein uS2 of Geobacter metallireducens (strain ATCC 53774 / DSM 7210 / GS-15).